Consider the following 374-residue polypeptide: Phosphate acyltransferase (374 aa).

The protein belongs to the PlsX family. In terms of assembly, homodimer. Probably interacts with PlsY.

The protein resides in the cytoplasm. It catalyses the reaction a fatty acyl-[ACP] + phosphate = an acyl phosphate + holo-[ACP]. The protein operates within lipid metabolism; phospholipid metabolism. Catalyzes the reversible formation of acyl-phosphate (acyl-PO(4)) from acyl-[acyl-carrier-protein] (acyl-ACP). This enzyme utilizes acyl-ACP as fatty acyl donor, but not acyl-CoA. In Gluconacetobacter diazotrophicus (strain ATCC 49037 / DSM 5601 / CCUG 37298 / CIP 103539 / LMG 7603 / PAl5), this protein is Phosphate acyltransferase.